Reading from the N-terminus, the 717-residue chain is Glycine--tRNA ligase beta subunit (717 aa).

Belongs to the class-II aminoacyl-tRNA synthetase family. In terms of assembly, tetramer of two alpha and two beta subunits.

It localises to the cytoplasm. The enzyme catalyses tRNA(Gly) + glycine + ATP = glycyl-tRNA(Gly) + AMP + diphosphate. The sequence is that of Glycine--tRNA ligase beta subunit from Agrobacterium fabrum (strain C58 / ATCC 33970) (Agrobacterium tumefaciens (strain C58)).